The chain runs to 281 residues: Transformer-2 protein homolog alpha (281 aa).

Positions 1–116 (MSDVEENNFE…TGSRANPDPN (116 aa)) are disordered. Serine 2 carries the post-translational modification N-acetylserine. Residues serine 2 and serine 14 each carry the phosphoserine modification. The residue at position 24 (threonine 24) is a Phosphothreonine. Residues 51–82 (RSRSKSRSRSRRHSHRRYTRSRSHSHRRRSRS) show a composition bias toward basic residues. Phosphoserine occurs at positions 80, 82, and 84. Threonine 86 carries the phosphothreonine modification. Over residues 90-108 (RRRRSRSHSPMSNRRRHTG) the composition is skewed to basic residues. Residues serine 94 and serine 96 each carry the phosphoserine modification. The RRM domain occupies 117–195 (TCLGVFGLSL…RRIRVDYSIT (79 aa)). Lysine 196 participates in a covalent cross-link: Glycyl lysine isopeptide (Lys-Gly) (interchain with G-Cter in SUMO2). The linker stretch occupies residues 196–223 (KRAHTPTPGIYMGRPTHSGGGGGGGGGG). The disordered stretch occupies residues 199–281 (HTPTPGIYMG…RSRSYSPRRY (83 aa)). Residues threonine 200 and threonine 202 each carry the phosphothreonine modification. Over residues 213–231 (SGGGGGGGGGGGGGGGGGG) the composition is skewed to gly residues. Arginine 233 carries the post-translational modification Omega-N-methylarginine. Basic and acidic residues predominate over residues 233 to 257 (RRRDSYYDRGYDRGYDRYEDYDYRR). Serine 237 carries the post-translational modification Phosphoserine. The segment covering 267–281 (YRSRSRSRSYSPRRY) has biased composition (basic residues).

This sequence belongs to the splicing factor SR family. In terms of assembly, binds to A3 enhancer proteins SRp75, SRp55, SRp40 and SRp30. Interacts with ILDR1 (via C-terminus) and ILDR2. Phosphorylated in the RS domains. Expressed in inner ear.

The protein resides in the nucleus. Its function is as follows. Sequence-specific RNA-binding protein which participates in the control of pre-mRNA splicing. This is Transformer-2 protein homolog alpha from Mus musculus (Mouse).